Reading from the N-terminus, the 322-residue chain is Ferredoxin--NADP reductase (322 aa).

FAD contacts are provided by Asp-34, Gln-42, Tyr-47, Val-87, Phe-120, Asp-279, and Thr-320.

Belongs to the ferredoxin--NADP reductase type 2 family. As to quaternary structure, homodimer. The cofactor is FAD.

It catalyses the reaction 2 reduced [2Fe-2S]-[ferredoxin] + NADP(+) + H(+) = 2 oxidized [2Fe-2S]-[ferredoxin] + NADPH. This chain is Ferredoxin--NADP reductase, found in Streptococcus sanguinis (strain SK36).